The sequence spans 775 residues: GRIP and coiled-coil domain-containing protein 1 (775 aa).

Residues 13 to 61 adopt a coiled-coil conformation; that stretch reads SKKDLLETIETQKKQLLQYQARLKDVVRAYKSLLKEKEALEASIKVLSV. Over residues 84–93 the composition is skewed to basic and acidic residues; sequence DDRCSTHSED. Disordered stretches follow at residues 84–153 and 614–639; these read DDRC…AGGE and GLPG…SDSL. Composition is skewed to low complexity over residues 94–110, 133–147, and 629–638; these read STGT…LTST, ASWS…SGDG, and DPADTSSSDS. Residues 153-763 are a coiled coil; it reads EVDKRLHQLK…PEEKQVIMRL (611 aa). The GRIP domain occupies 713-763; sequence QSREGANLEYLKNIIYRFLTLPDSLGRQQTLTAILTILHFSPEEKQVIMRL.

It is found in the cytoplasm. The protein resides in the golgi apparatus membrane. Probably involved in maintaining Golgi structure. The protein is GRIP and coiled-coil domain-containing protein 1 (GCC1) of Homo sapiens (Human).